Reading from the N-terminus, the 98-residue chain is NADH-ubiquinone oxidoreductase chain 4L (98 aa).

The next 3 membrane-spanning stretches (helical) occupy residues 1 to 21, 30 to 50, and 61 to 81; these read MSMV…GLLI, LLCL…TILI, and IILL…LVMI.

It belongs to the complex I subunit 4L family. Core subunit of respiratory chain NADH dehydrogenase (Complex I) which is composed of 45 different subunits.

Its subcellular location is the mitochondrion inner membrane. The enzyme catalyses a ubiquinone + NADH + 5 H(+)(in) = a ubiquinol + NAD(+) + 4 H(+)(out). Functionally, core subunit of the mitochondrial membrane respiratory chain NADH dehydrogenase (Complex I) which catalyzes electron transfer from NADH through the respiratory chain, using ubiquinone as an electron acceptor. Part of the enzyme membrane arm which is embedded in the lipid bilayer and involved in proton translocation. The sequence is that of NADH-ubiquinone oxidoreductase chain 4L (MT-ND4L) from Neovison vison (American mink).